The following is a 312-amino-acid chain: MSSLRTADDTWDIATSVGSTAVMVAASRAAETERDEALIRDPYARLLVTGAGTGIWESVLDAKFVETVAAADAEAAAIFEHMNSYQAVRTHFFDAFFTAAAEAGIRQIVILASGLDSRAYRLDWPSGTTVYEIDQPKVLEYKSATLAEHGVEPVATRREVGIDLRHDWPAALRGAGFDPSRPTAWLAEGLLMYLPADAQDRLFEQITELSAPGSRVAAETAGVQAEDRRQQMRERFERIAEKFDMTASLDIQQLIYEDPDRADVADWLDAHGWTATAVSSQQEMRRLDRWALPADLTDDDAFSNFVTAEKLS.

S-adenosyl-L-methionine contacts are provided by residues aspartate 134 and 163–164 (DL).

It belongs to the UPF0677 family.

Functionally, exhibits S-adenosyl-L-methionine-dependent methyltransferase activity. In Mycobacterium sp. (strain JLS), this protein is Putative S-adenosyl-L-methionine-dependent methyltransferase Mjls_0078.